The primary structure comprises 468 residues: Glucose transport protein (468 aa).

The Cytoplasmic segment spans residues 1 to 17 (MNPSSSPSQSTANVKFV). A helical transmembrane segment spans residues 18–38 (LLISGVAALGGFLFGFDTAVI). Residues 39-58 (NGAVAALQKHFQTDSLLTGL) are Extracellular-facing. The chain crosses the membrane as a helical span at residues 59–78 (SVSLALLGSALGAFGAGPIA). The Cytoplasmic segment spans residues 79-84 (DRHGRI). The chain crosses the membrane as a helical span at residues 85 to 105 (KTMILAAVLFTLSSIGSGLPF). Topologically, residues 106–114 (TIWDFIFWR) are extracellular. A helical transmembrane segment spans residues 115-135 (VLGGIGVGAASVIAPAYIAEV). Residues 136–149 (SPAHLRGRLGSLQQ) are Cytoplasmic-facing. The chain crosses the membrane as a helical span at residues 150–170 (LAIVSGIFIALLSNWFIALMA). Residues 171–186 (GGSAQNPWLFGAAAWR) lie on the Extracellular side of the membrane. A helical membrane pass occupies residues 187 to 207 (WMFWTELIPALLYGVCAFLIP). Over 208–265 (ESPRYLVAQGQGEKAAAILWKVEGGDVPSRIEEIQATVSLDHKPRFSDLLSRRGGLLP) the chain is Cytoplasmic. The chain crosses the membrane as a helical span at residues 266–286 (IVWIGMGLSALQQFVGINVIF). The Extracellular segment spans residues 287–307 (YYSSVLWRSVGFTEEKSLLIT). A helical transmembrane segment spans residues 308–328 (VITGFINILTTLVAIAFVDKF). Over 329 to 331 (GRK) the chain is Cytoplasmic. A helical transmembrane segment spans residues 332 to 352 (PLLLMGSIGMTITLGILSVVF). The Extracellular portion of the chain corresponds to 353-366 (GGATVVNGQPTLTG). The helical transmembrane segment at 367 to 387 (AAGIIALVTANLYVFSFGFSW) threads the bilayer. Topologically, residues 388-412 (GPIVWVLLGEMFNNKIRAAALSVAA) are cytoplasmic. The helical transmembrane segment at 413–433 (GVQWIANFIISTTFPPLLDTV) threads the bilayer. Residues 434-436 (GLG) lie on the Extracellular side of the membrane. Residues 437 to 457 (PAYGLYATSAAISIFFIWFFV) traverse the membrane as a helical segment. Residues 458–468 (KETKGKTLEQM) are Cytoplasmic-facing.

Belongs to the major facilitator superfamily. Sugar transporter (TC 2.A.1.1) family.

The protein localises to the cell membrane. The protein is Glucose transport protein (gtr) of Synechocystis sp. (strain ATCC 27184 / PCC 6803 / Kazusa).